Here is a 253-residue protein sequence, read N- to C-terminus: Salivary gland SP38-40.B protein (253 aa).

The signal sequence occupies residues 1-21 (MRIKFLVVLAVICLLAHYASA). Disordered regions lie at residues 23–51 (GMGGDKKPKDAPKPKDAPKPKEVKPVKAD), 140–168 (KDEKKEKKVVKVIKPPKEKPPKKPRKECS), and 203–253 (VQGK…DAKK). Composition is skewed to basic and acidic residues over residues 26–51 (GDKKPKDAPKPKDAPKPKEVKPVKAD) and 154–168 (PPKEKPPKKPRKECS). 2 consecutive repeat copies span residues 29-34 (KPKDAP) and 35-40 (KPKDAP). Residues 29–47 (KPKDAPKPKDAPKPKEVKP) form a 3 X 6 AA approximate tandem repeats of K-P-K-D-A-P region. The stretch at 41-47 (KPKEVKP) is one 1-3; approximate repeat. A run of 2 repeats spans residues 153 to 156 (KPPK) and 158 to 161 (KPPK). The 3 X 4 AA approximate tandem repeats of K-P-P-K stretch occupies residues 153-166 (KPPKEKPPKKPRKE). The stretch at 162-166 (KPRKE) is one 2-3; approximate repeat. A compositionally biased stretch (basic residues) spans 206-217 (KQKKGAKKAKGG). Tandem repeats lie at residues 222 to 225 (PKPG), 226 to 229 (PKPA), 230 to 233 (PKPG), 234 to 237 (PKPA), 238 to 241 (PKPV), and 242 to 245 (PKPA). The tract at residues 222-249 (PKPGPKPAPKPGPKPAPKPVPKPADKPK) is 7 X 4 AA approximate tandem repeats of P-K-P-[GAV]. The span at 225–243 (GPKPAPKPGPKPAPKPVPK) shows a compositional bias: pro residues. Positions 244–253 (PADKPKDAKK) are enriched in basic and acidic residues. A 3-7; approximate repeat occupies 246–249 (DKPK).

Salivary gland.

Its subcellular location is the secreted. Used by the larvae to construct a supramolecular structure, the larval tube. The sequence is that of Salivary gland SP38-40.B protein (SP38-40.B) from Chironomus tentans (Midge).